Here is a 354-residue protein sequence, read N- to C-terminus: Holliday junction branch migration complex subunit RuvB (354 aa).

The segment covering 1 to 10 (MAIKRNQGSN) has biased composition (polar residues). Residues 1 to 36 (MAIKRNQGSNPKPEKKERLTKAETHQEQDNLEESIR) are disordered. A compositionally biased stretch (basic and acidic residues) spans 12–36 (KPEKKERLTKAETHQEQDNLEESIR). Residues 13 to 196 (PEKKERLTKA…FGLIQRLKFY (184 aa)) are large ATPase domain (RuvB-L). ATP-binding positions include isoleucine 35, arginine 36, glycine 77, lysine 80, threonine 81, threonine 82, 143–145 (EDY), arginine 186, tyrosine 196, and arginine 233. Residue threonine 81 participates in Mg(2+) binding. The interval 197–267 (EPEELALIIK…LAAEALDIYQ (71 aa)) is small ATPAse domain (RuvB-S). The tract at residues 270–354 (PQGLDWTDRL…EEQLSIFSEQ (85 aa)) is head domain (RuvB-H). DNA-binding residues include arginine 325 and arginine 330.

The protein belongs to the RuvB family. Homohexamer. Forms an RuvA(8)-RuvB(12)-Holliday junction (HJ) complex. HJ DNA is sandwiched between 2 RuvA tetramers; dsDNA enters through RuvA and exits via RuvB. An RuvB hexamer assembles on each DNA strand where it exits the tetramer. Each RuvB hexamer is contacted by two RuvA subunits (via domain III) on 2 adjacent RuvB subunits; this complex drives branch migration. In the full resolvosome a probable DNA-RuvA(4)-RuvB(12)-RuvC(2) complex forms which resolves the HJ.

The protein localises to the cytoplasm. It catalyses the reaction ATP + H2O = ADP + phosphate + H(+). Functionally, the RuvA-RuvB-RuvC complex processes Holliday junction (HJ) DNA during genetic recombination and DNA repair, while the RuvA-RuvB complex plays an important role in the rescue of blocked DNA replication forks via replication fork reversal (RFR). RuvA specifically binds to HJ cruciform DNA, conferring on it an open structure. The RuvB hexamer acts as an ATP-dependent pump, pulling dsDNA into and through the RuvAB complex. RuvB forms 2 homohexamers on either side of HJ DNA bound by 1 or 2 RuvA tetramers; 4 subunits per hexamer contact DNA at a time. Coordinated motions by a converter formed by DNA-disengaged RuvB subunits stimulates ATP hydrolysis and nucleotide exchange. Immobilization of the converter enables RuvB to convert the ATP-contained energy into a lever motion, pulling 2 nucleotides of DNA out of the RuvA tetramer per ATP hydrolyzed, thus driving DNA branch migration. The RuvB motors rotate together with the DNA substrate, which together with the progressing nucleotide cycle form the mechanistic basis for DNA recombination by continuous HJ branch migration. Branch migration allows RuvC to scan DNA until it finds its consensus sequence, where it cleaves and resolves cruciform DNA. This is Holliday junction branch migration complex subunit RuvB from Crocosphaera subtropica (strain ATCC 51142 / BH68) (Cyanothece sp. (strain ATCC 51142)).